The primary structure comprises 321 residues: Glucokinase (321 aa).

Position 8–13 (8–13 (GDVGGT)) interacts with ATP.

It belongs to the bacterial glucokinase family.

The protein localises to the cytoplasm. It catalyses the reaction D-glucose + ATP = D-glucose 6-phosphate + ADP + H(+). The protein is Glucokinase of Pectobacterium atrosepticum (strain SCRI 1043 / ATCC BAA-672) (Erwinia carotovora subsp. atroseptica).